A 92-amino-acid polypeptide reads, in one-letter code: MKLCVSALSLLLLVAAFCAPGFSAPMGSDPPTSCCFSYTSRQLHRSFVMDYYETSSLCSKPAVVFLTKRGRQICANPSEPWVTEYMSDLELN.

Residues 1-23 (MKLCVSALSLLLLVAAFCAPGFS) form the signal peptide. 2 cysteine pairs are disulfide-bonded: C34/C58 and C35/C74.

It belongs to the intercrine beta (chemokine CC) family. Homodimer.

Its subcellular location is the secreted. Functionally, monokine with inflammatory and chemokinetic properties. The protein is C-C motif chemokine 4 (Ccl4) of Mus musculus (Mouse).